Here is a 70-residue protein sequence, read N- to C-terminus: Large ribosomal subunit protein uL29 (70 aa).

This sequence belongs to the universal ribosomal protein uL29 family.

The sequence is that of Large ribosomal subunit protein uL29 from Rickettsia bellii (strain OSU 85-389).